Here is a 352-residue protein sequence, read N- to C-terminus: Pollen-specific protein SF21 (352 aa).

The protein belongs to the NDRG family. In terms of tissue distribution, pollen.

The sequence is that of Pollen-specific protein SF21 (SF21) from Helianthus annuus (Common sunflower).